The sequence spans 522 residues: Cytochrome b mRNA maturase bI3 (522 aa).

The Mitochondrial matrix segment spans residues 1 to 31 (MTIRKSNPYLSLVNSYLMDSPQPSSMNYWWN). The segment at 1–163 (MTIRKSNPYL…MPFMGGDLVP (163 aa)) is cytochrome b. Residues 32 to 52 (VGSLLGLCLVMQMASGMFLAM) form a helical membrane-spanning segment. Over 53–84 (HYSSSMELAFNSVEHMMRDVNAGWLMRYIHAN) the chain is Mitochondrial intermembrane. Residues 85–105 (GASFFFMCLYLHMGKALYYGS) form a helical membrane-spanning segment. Topologically, residues 106-110 (YKSPR) are mitochondrial matrix. Residues 111–131 (VLVWSMGVMMFMLTMATAFMG) form a helical membrane-spanning segment. Residues 132-154 (YCLVYGQMSHWGATVITNLLSAM) lie on the Mitochondrial intermembrane side of the membrane. A helical transmembrane segment spans residues 155–175 (PFMGGDLVPLSIILSLYLLYI). Positions 164–522 (LSIILSLYLL…PYMSWHQKEQ (359 aa)) are maturase. At 176 to 522 (SLKTFMKMIF…PYMSWHQKEQ (347 aa)) the chain is on the mitochondrial matrix side.

This sequence in the N-terminal section; belongs to the cytochrome b family. In the C-terminal section; belongs to the LAGLIDADG endonuclease family.

The protein localises to the mitochondrion inner membrane. Mitochondrial mRNA maturase required for splicing of intron 3 of the cytochrome b (COB) gene, containing its own coding sequence. The polypeptide is Cytochrome b mRNA maturase bI3 (bI3) (Debaryomyces hansenii (strain ATCC 36239 / CBS 767 / BCRC 21394 / JCM 1990 / NBRC 0083 / IGC 2968) (Yeast)).